Consider the following 329-residue polypeptide: DNA-directed RNA polymerase subunit alpha (329 aa).

Positions 1-235 are alpha N-terminal domain (alpha-NTD); the sequence is MQGSVIEFLK…EQLDAFVDLR (235 aa). The interval 249–329 is alpha C-terminal domain (alpha-CTD); that stretch reads FDPILLRPVD…NWPPASIAED (81 aa).

The protein belongs to the RNA polymerase alpha chain family. As to quaternary structure, homodimer. The RNAP catalytic core consists of 2 alpha, 1 beta, 1 beta' and 1 omega subunit. When a sigma factor is associated with the core the holoenzyme is formed, which can initiate transcription.

It carries out the reaction RNA(n) + a ribonucleoside 5'-triphosphate = RNA(n+1) + diphosphate. DNA-dependent RNA polymerase catalyzes the transcription of DNA into RNA using the four ribonucleoside triphosphates as substrates. The protein is DNA-directed RNA polymerase subunit alpha of Haemophilus ducreyi (strain 35000HP / ATCC 700724).